A 404-amino-acid chain; its full sequence is Cysteine desulfurase IscS (404 aa).

Residues 75-76 (AT), Asn-155, Gln-183, and 203-205 (SAH) each bind pyridoxal 5'-phosphate. Lys-206 bears the N6-(pyridoxal phosphate)lysine mark. Position 243 (Thr-243) interacts with pyridoxal 5'-phosphate. Cys-328 functions as the Cysteine persulfide intermediate in the catalytic mechanism. Residue Cys-328 coordinates [2Fe-2S] cluster.

This sequence belongs to the class-V pyridoxal-phosphate-dependent aminotransferase family. NifS/IscS subfamily. As to quaternary structure, homodimer. Forms a heterotetramer with IscU, interacts with other sulfur acceptors. Pyridoxal 5'-phosphate serves as cofactor.

The protein localises to the cytoplasm. It catalyses the reaction (sulfur carrier)-H + L-cysteine = (sulfur carrier)-SH + L-alanine. It functions in the pathway cofactor biosynthesis; iron-sulfur cluster biosynthesis. Master enzyme that delivers sulfur to a number of partners involved in Fe-S cluster assembly, tRNA modification or cofactor biosynthesis. Catalyzes the removal of elemental sulfur atoms from cysteine to produce alanine. Functions as a sulfur delivery protein for Fe-S cluster synthesis onto IscU, an Fe-S scaffold assembly protein, as well as other S acceptor proteins. The protein is Cysteine desulfurase IscS of Neisseria gonorrhoeae (strain ATCC 700825 / FA 1090).